A 344-amino-acid polypeptide reads, in one-letter code: Melanocyte-stimulating hormone receptor (344 aa).

Residues 1–37 (MPMQGAQRKLLGSLNSTPTATSNLGLAANHTGAPCLE) are Extracellular-facing. Asn-29 carries N-linked (GlcNAc...) asparagine glycosylation. A helical transmembrane segment spans residues 38 to 63 (VSIPDGLFLSLGLVSLVENVLVVAAI). The Cytoplasmic portion of the chain corresponds to 64-72 (AKNRNLHSS). Residues 73-93 (MYCFICCLALSDLLVSGSNML) form a helical membrane-spanning segment. Over 94 to 118 (ETAIILLLEAGTLATRASVVQQLHN) the chain is Extracellular. A helical transmembrane segment spans residues 119–140 (TIDVLTCSSMLCSLCFLGAIAV). Over 141–163 (DRYISIFYALRYHSIMTLPRAQR) the chain is Cytoplasmic. A helical transmembrane segment spans residues 164–183 (AIAAIWVTSVLSSTLFITYY). The Extracellular segment spans residues 184 to 191 (DHAAVLLC). The helical transmembrane segment at 192–211 (LVVFFLAMLVLMAVLYVHML) threads the bilayer. Over 212–240 (ARACQHAQGIIRLHNRQLPAHKGFGLRGA) the chain is Cytoplasmic. A helical membrane pass occupies residues 241 to 266 (ATLTILLGIFFLCWGPFFLHLTLVVF). At 267–279 (CPQHLTCNCIFKN) the chain is on the extracellular side. A helical membrane pass occupies residues 280-300 (FKVFLTLIICNTIIDPLIYAF). Topologically, residues 301 to 344 (RSQELRRTLKEVLLCSWWPGCGAEGGGDSVWPGSCVTLRGPLPP) are cytoplasmic. Cys-315 carries S-palmitoyl cysteine lipidation.

This sequence belongs to the G-protein coupled receptor 1 family. As to quaternary structure, interacts with MGRN1, but does not undergo MGRN1-mediated ubiquitination; this interaction competes with GNAS-binding and thus inhibits agonist-induced cAMP production. Interacts with OPN3; the interaction results in a decrease in MC1R-mediated cAMP signaling and ultimately a decrease in melanin production in melanocytes.

It is found in the cell membrane. Receptor for MSH (alpha, beta and gamma) and ACTH. The activity of this receptor is mediated by G proteins which activate adenylate cyclase. Mediates melanogenesis, the production of eumelanin (black/brown) and phaeomelanin (red/yellow), via regulation of cAMP signaling in melanocytes. This chain is Melanocyte-stimulating hormone receptor (MC1R), found in Mico argentatus (Silvery marmoset).